A 374-amino-acid chain; its full sequence is RNA polymerase sigma factor SigA (374 aa).

The sigma-70 factor domain-2 stretch occupies residues 141–211 (LAEANLRLVV…TRAIADQART (71 aa)). The Interaction with polymerase core subunit RpoC signature appears at 165 to 168 (DLIQ). The segment at 220–296 (ETINKLIRVQ…DQDATSPSDH (77 aa)) is sigma-70 factor domain-3. The tract at residues 309-362 (VLDTLTDREENVLRLRFGLDDGRTRTLEEVGRVFGVTRERIRQIEAKALRKLRH) is sigma-70 factor domain-4. Positions 335–354 (LEEVGRVFGVTRERIRQIEA) form a DNA-binding region, H-T-H motif.

It belongs to the sigma-70 factor family. RpoD/SigA subfamily. Interacts transiently with the RNA polymerase catalytic core.

The protein localises to the cytoplasm. Sigma factors are initiation factors that promote the attachment of RNA polymerase to specific initiation sites and are then released. This sigma factor is the primary sigma factor during exponential growth. This Listeria monocytogenes serovar 1/2a (strain ATCC BAA-679 / EGD-e) protein is RNA polymerase sigma factor SigA.